The following is a 249-amino-acid chain: Ribonuclease PH (249 aa).

Phosphate is bound by residues arginine 86 and 124–126 (GTR).

It belongs to the RNase PH family. As to quaternary structure, homohexameric ring arranged as a trimer of dimers.

The enzyme catalyses tRNA(n+1) + phosphate = tRNA(n) + a ribonucleoside 5'-diphosphate. Its function is as follows. Phosphorolytic 3'-5' exoribonuclease that plays an important role in tRNA 3'-end maturation. Removes nucleotide residues following the 3'-CCA terminus of tRNAs; can also add nucleotides to the ends of RNA molecules by using nucleoside diphosphates as substrates, but this may not be physiologically important. Probably plays a role in initiation of 16S rRNA degradation (leading to ribosome degradation) during starvation. The polypeptide is Ribonuclease PH (Clostridium botulinum (strain Alaska E43 / Type E3)).